Consider the following 63-residue polypeptide: DNA gyrase inhibitor YacG (63 aa).

Positions 9, 12, 28, and 32 each coordinate Zn(2+).

Belongs to the DNA gyrase inhibitor YacG family. As to quaternary structure, interacts with GyrB. Zn(2+) serves as cofactor.

Functionally, inhibits all the catalytic activities of DNA gyrase by preventing its interaction with DNA. Acts by binding directly to the C-terminal domain of GyrB, which probably disrupts DNA binding by the gyrase. In Salmonella arizonae (strain ATCC BAA-731 / CDC346-86 / RSK2980), this protein is DNA gyrase inhibitor YacG.